Reading from the N-terminus, the 195-residue chain is HTH-type transcriptional regulator BetI (195 aa).

An HTH tetR-type domain is found at 8–68 (SIRRRQLIDA…ATMRDITSQL (61 aa)). Residues 31–50 (TIAQIARRAGVSTGIISHYF) constitute a DNA-binding region (H-T-H motif).

It participates in amine and polyamine biosynthesis; betaine biosynthesis via choline pathway [regulation]. In terms of biological role, repressor involved in the biosynthesis of the osmoprotectant glycine betaine. It represses transcription of the choline transporter BetT and the genes of BetAB involved in the synthesis of glycine betaine. The protein is HTH-type transcriptional regulator BetI of Escherichia coli (strain UTI89 / UPEC).